Consider the following 212-residue polypeptide: MDYLLMIFSLLFVACQGAPETAVLGAELSAVGENGGEKPTPSPPWRLRRSKRCSCSSLMDKECVYFCHLDIIWVNTPEHVVPYGLGSPRSKRALENLLPTKATDRENRCQCASQKDKKCWNFCQAGKELRAEDIMEKDWNNHKKGKDCSKLGKKCIYQQLVRGRKIRRSSEEHLRQTRSETMRNSVKSSFHDPKLKGKPSRERYVTHNRAHW.

The signal sequence occupies residues M1 to G17. A propeptide spanning residues A18–S50 is cleaved from the precursor. 2 disulfide bridges follow: C53/C67 and C55/C63. The propeptide occupies V74–W212. The interval C109–C123 is endothelin-like. Basic and acidic residues-rich tracts occupy residues R168–T181 and S189–V205. The tract at residues R168–W212 is disordered.

The protein belongs to the endothelin/sarafotoxin family. In terms of tissue distribution, expressed in lung, placental stem villi vessels and in cultured placental vascular smooth muscle cells.

The protein localises to the secreted. Endothelins are endothelium-derived vasoconstrictor peptides. Probable ligand for G-protein coupled receptors EDNRA and EDNRB which activates PTK2B, BCAR1, BCAR3 and, GTPases RAP1 and RHOA cascade in glomerular mesangial cells. Also binds the DEAR/FBXW7-AS1 receptor. Promotes mesenteric arterial wall remodeling via activation of ROCK signaling and subsequent colocalization of NFATC3 with F-actin filaments. NFATC3 then translocates to the nucleus where it subsequently promotes the transcription of the smooth muscle hypertrophy and differentiation marker ACTA2. This is Endothelin-1 (EDN1) from Homo sapiens (Human).